The sequence spans 154 residues: TSET complex member tstD (154 aa).

It belongs to the adaptor complexes small subunit family. In terms of assembly, component of the TSET complex, a heterohexamer composed of tstA, tstB, tstC, tstD, tstE and tstF, which may act in plasma membrane turnover. tstA, tstB, tstC and tstD are likely to be the core complex members with tstE and tstF acting as associated scaffold proteins.

Its subcellular location is the cell membrane. The protein resides in the cytoplasm. In Dictyostelium discoideum (Social amoeba), this protein is TSET complex member tstD.